Here is a 560-residue protein sequence, read N- to C-terminus: Oxygen-dependent choline dehydrogenase (560 aa).

8–37 lines the FAD pocket; the sequence is DYIIIGAGSAGNVLATRLTEDADVSVLLLE. Histidine 475 serves as the catalytic Proton acceptor.

Belongs to the GMC oxidoreductase family. It depends on FAD as a cofactor.

It catalyses the reaction choline + A = betaine aldehyde + AH2. The catalysed reaction is betaine aldehyde + NAD(+) + H2O = glycine betaine + NADH + 2 H(+). It functions in the pathway amine and polyamine biosynthesis; betaine biosynthesis via choline pathway; betaine aldehyde from choline (cytochrome c reductase route): step 1/1. Involved in the biosynthesis of the osmoprotectant glycine betaine. Catalyzes the oxidation of choline to betaine aldehyde and betaine aldehyde to glycine betaine at the same rate. The polypeptide is Oxygen-dependent choline dehydrogenase (Stenotrophomonas maltophilia (strain K279a)).